A 282-amino-acid polypeptide reads, in one-letter code: 3-methyl-2-oxobutanoate hydroxymethyltransferase (282 aa).

Asp-45 and Asp-84 together coordinate Mg(2+). Residues 45–46, Asp-84, and Lys-114 contribute to the 3-methyl-2-oxobutanoate site; that span reads DS. Glu-116 contributes to the Mg(2+) binding site. The Proton acceptor role is filled by Glu-183.

This sequence belongs to the PanB family. In terms of assembly, homodecamer; pentamer of dimers. The cofactor is Mg(2+).

Its subcellular location is the cytoplasm. The enzyme catalyses 3-methyl-2-oxobutanoate + (6R)-5,10-methylene-5,6,7,8-tetrahydrofolate + H2O = 2-dehydropantoate + (6S)-5,6,7,8-tetrahydrofolate. It participates in cofactor biosynthesis; (R)-pantothenate biosynthesis; (R)-pantoate from 3-methyl-2-oxobutanoate: step 1/2. In terms of biological role, catalyzes the reversible reaction in which hydroxymethyl group from 5,10-methylenetetrahydrofolate is transferred onto alpha-ketoisovalerate to form ketopantoate. This Syntrophobacter fumaroxidans (strain DSM 10017 / MPOB) protein is 3-methyl-2-oxobutanoate hydroxymethyltransferase.